The following is a 249-amino-acid chain: tRNA pseudouridine synthase A (249 aa).

Catalysis depends on aspartate 52, which acts as the Nucleophile. Tyrosine 110 contacts substrate.

Belongs to the tRNA pseudouridine synthase TruA family. In terms of assembly, homodimer.

The enzyme catalyses uridine(38/39/40) in tRNA = pseudouridine(38/39/40) in tRNA. Functionally, formation of pseudouridine at positions 38, 39 and 40 in the anticodon stem and loop of transfer RNAs. This chain is tRNA pseudouridine synthase A, found in Syntrophomonas wolfei subsp. wolfei (strain DSM 2245B / Goettingen).